A 147-amino-acid polypeptide reads, in one-letter code: Myoglobin (147 aa).

A2 is subject to N-acetylalanine. Positions 2 to 141 (ADFDAVLKCW…IIADLEANYK (140 aa)) constitute a Globin domain. Nitrite is bound at residue H60. Residue H60 coordinates O2. Position 89 (H89) interacts with heme b.

This sequence belongs to the globin family. As to quaternary structure, monomeric.

Its subcellular location is the cytoplasm. It localises to the sarcoplasm. The enzyme catalyses Fe(III)-heme b-[protein] + nitric oxide + H2O = Fe(II)-heme b-[protein] + nitrite + 2 H(+). It carries out the reaction H2O2 + AH2 = A + 2 H2O. Its function is as follows. Monomeric heme protein which primary function is to store oxygen and facilitate its diffusion within muscle tissues. Reversibly binds oxygen through a pentacoordinated heme iron and enables its timely and efficient release as needed during periods of heightened demand. Depending on the oxidative conditions of tissues and cells, and in addition to its ability to bind oxygen, it also has a nitrite reductase activity whereby it regulates the production of bioactive nitric oxide. Under stress conditions, like hypoxia and anoxia, it also protects cells against reactive oxygen species thanks to its pseudoperoxidase activity. This is Myoglobin (mb) from Thunnus albacares (Yellowfin tuna).